Here is a 303-residue protein sequence, read N- to C-terminus: MIRQRTLKNTIRATGVGLHSGEKVYLTLKPAPVDTGIVFRRADLSPVVEIPARAANVGETTMSTTLVNGDVKVDTVEHLLSAMAGLGIDNAYVELSASEVPIMDGSAGPFVFLIQSAGLEEQDAPKKFIRILREVTVEDGDKRATFLPFDGFKVSFEIDFDHPVLKGQTQSASVDFSSTSFVKEVSRARTFGFMRDIEYLRKHNLALGGSVENAIVVDETGVLNEDGLRSEDEFVKHKILDAIGDLYLLGNSLIGEFKGYKSGHSLNNQLLRKLIAETDAWEVVFFEDASTAPISYMRPVAAV.

The Zn(2+) site is built by His-78, His-237, and Asp-241. The active-site Proton donor is His-264.

The protein belongs to the LpxC family. The cofactor is Zn(2+).

It catalyses the reaction a UDP-3-O-[(3R)-3-hydroxyacyl]-N-acetyl-alpha-D-glucosamine + H2O = a UDP-3-O-[(3R)-3-hydroxyacyl]-alpha-D-glucosamine + acetate. It participates in glycolipid biosynthesis; lipid IV(A) biosynthesis; lipid IV(A) from (3R)-3-hydroxytetradecanoyl-[acyl-carrier-protein] and UDP-N-acetyl-alpha-D-glucosamine: step 2/6. Catalyzes the hydrolysis of UDP-3-O-myristoyl-N-acetylglucosamine to form UDP-3-O-myristoylglucosamine and acetate, the committed step in lipid A biosynthesis. This Pseudomonas entomophila (strain L48) protein is UDP-3-O-acyl-N-acetylglucosamine deacetylase.